We begin with the raw amino-acid sequence, 370 residues long: Anhydro-N-acetylmuramic acid kinase (370 aa).

Position 13–20 (13–20) interacts with ATP; sequence GTSMDGID.

Belongs to the anhydro-N-acetylmuramic acid kinase family.

The catalysed reaction is 1,6-anhydro-N-acetyl-beta-muramate + ATP + H2O = N-acetyl-D-muramate 6-phosphate + ADP + H(+). It participates in amino-sugar metabolism; 1,6-anhydro-N-acetylmuramate degradation. It functions in the pathway cell wall biogenesis; peptidoglycan recycling. Functionally, catalyzes the specific phosphorylation of 1,6-anhydro-N-acetylmuramic acid (anhMurNAc) with the simultaneous cleavage of the 1,6-anhydro ring, generating MurNAc-6-P. Is required for the utilization of anhMurNAc either imported from the medium or derived from its own cell wall murein, and thus plays a role in cell wall recycling. This chain is Anhydro-N-acetylmuramic acid kinase, found in Rhizobium etli (strain ATCC 51251 / DSM 11541 / JCM 21823 / NBRC 15573 / CFN 42).